Consider the following 198-residue polypeptide: Ribosome maturation factor RimP (198 aa).

Belongs to the RimP family.

It is found in the cytoplasm. Functionally, required for maturation of 30S ribosomal subunits. This is Ribosome maturation factor RimP from Agrobacterium fabrum (strain C58 / ATCC 33970) (Agrobacterium tumefaciens (strain C58)).